The primary structure comprises 68 residues: Large ribosomal subunit protein bL33c (68 aa).

The protein belongs to the bacterial ribosomal protein bL33 family.

It is found in the plastid. Its subcellular location is the chloroplast. This is Large ribosomal subunit protein bL33c from Pinus koraiensis (Korean pine).